Here is a 436-residue protein sequence, read N- to C-terminus: Acetylcholine receptor non-alpha chain (436 aa).

Topologically, residues 1–195 (IIDVHEIDQI…IFYLELRRKP (195 aa)) are extracellular. An N-linked (GlcNAc...) asparagine glycan is attached at Asn62. A disulfide bridge connects residues Cys89 and Cys103. Asn140 carries N-linked (GlcNAc...) asparagine glycosylation. The next 3 membrane-spanning stretches (helical) occupy residues 196 to 219 (LFYT…AFYL), 227 to 245 (VTLC…LLLK), and 261 to 280 (YLLF…VISL). The Cytoplasmic portion of the chain corresponds to 281–404 (NLHFRRPSTH…WKFVARVLDR (124 aa)). The helical transmembrane segment at 405 to 423 (LFLLLFSIACFLGTILILF) threads the bilayer.

The protein belongs to the ligand-gated ion channel (TC 1.A.9) family. Acetylcholine receptor (TC 1.A.9.1) subfamily.

It is found in the postsynaptic cell membrane. It localises to the cell membrane. In terms of biological role, after binding acetylcholine, the AChR responds by an extensive change in conformation that affects all subunits and leads to opening of an ion-conducting channel across the plasma membrane. In Onchocerca volvulus, this protein is Acetylcholine receptor non-alpha chain.